Consider the following 343-residue polypeptide: E3 ubiquitin-protein ligase RNF113A (343 aa).

The residue at position 2 (alanine 2) is an N-acetylalanine. Residues 2–60 are important for interaction with SNRNP200/BRR2; it reads AEQLSPGKTTDQVCTFLFKKPGRKVAAGRRKRPICNQESGDSSSSSDEGNTVVRPEKKR. At serine 6 the chain carries Phosphoserine. The segment covering 23–34 has biased composition (basic residues); the sequence is GRKVAAGRRKRP. Positions 23 to 95 are disordered; sequence GRKVAAGRRK…EEEEENKSES (73 aa). A compositionally biased stretch (low complexity) spans 39-50; it reads ESGDSSSSSDEG. An important for interaction with CXCR4 region spans residues 50–61; it reads GNTVVRPEKKRA. 2 positions are modified to phosphoserine: serine 84 and serine 85. Residues 196–224 form a C3H1-type zinc finger; it reads DYQPDICKDYKETGFCGFGDSCKFLHDRS. Serine 253 carries the phosphoserine modification. Residues 262–300 form an RING-type zinc finger; it reads CFICRQTFQNPVVTKCRHYFCESCALQHFRTTPRCYVCD. The interval 323–343 is disordered; that stretch reads AEGGGASGFPEDPDEDPVPIT. A compositionally biased stretch (acidic residues) spans 333 to 343; it reads EDPDEDPVPIT.

As to quaternary structure, component of pre-catalytic and catalytic spliceosome complexes. Interacts (via N-terminus) with the spliceosome subunit SNRNP200/BRR2. Component of the minor spliceosome. Within this complex, interacts with SCNM1 and CRIPT.

The protein localises to the nucleus. It localises to the nucleus speckle. The catalysed reaction is S-ubiquitinyl-[E2 ubiquitin-conjugating enzyme]-L-cysteine + [acceptor protein]-L-lysine = [E2 ubiquitin-conjugating enzyme]-L-cysteine + N(6)-ubiquitinyl-[acceptor protein]-L-lysine.. Its pathway is protein modification; protein ubiquitination. Required for pre-mRNA splicing as component of the spliceosome. As a component of the minor spliceosome, involved in the splicing of U12-type introns in pre-mRNAs. E3 ubiquitin-protein ligase that catalyzes the transfer of ubiquitin onto target proteins. Catalyzes polyubiquitination of SNRNP200/BRR2 with non-canonical 'Lys-63'-linked polyubiquitin chains. Plays a role in DNA repair via its role in the synthesis of 'Lys-63'-linked polyubiquitin chains that recruit ALKBH3 and the ASCC complex to sites of DNA damage by alkylating agents. Ubiquitinates CXCR4, leading to its degradation, and thereby contributes to the termination of CXCR4 signaling. In Bos taurus (Bovine), this protein is E3 ubiquitin-protein ligase RNF113A (RNF113A).